Here is an 85-residue protein sequence, read N- to C-terminus: N.vectensis toxin 6 (85 aa).

The signal sequence occupies residues 1-20; it reads MISFKTVIVCLFLWVVIIGA. Disulfide bonds link C46–C82, C48–C71, and C64–C83.

In terms of biological role, probable toxin. The polypeptide is N.vectensis toxin 6 (Nematostella vectensis (Starlet sea anemone)).